A 473-amino-acid chain; its full sequence is Ribulose bisphosphate carboxylase large chain (473 aa).

Substrate contacts are provided by Asn-116 and Thr-166. The active-site Proton acceptor is Lys-168. Substrate is bound at residue Lys-170. The Mg(2+) site is built by Lys-194, Asp-196, and Glu-197. At Lys-194 the chain carries N6-carboxylysine. His-287 serves as the catalytic Proton acceptor. Residues Arg-288, His-320, and Ser-372 each coordinate substrate.

It belongs to the RuBisCO large chain family. Type I subfamily. Heterohexadecamer of 8 large chains and 8 small chains. Mg(2+) serves as cofactor.

The catalysed reaction is 2 (2R)-3-phosphoglycerate + 2 H(+) = D-ribulose 1,5-bisphosphate + CO2 + H2O. It carries out the reaction D-ribulose 1,5-bisphosphate + O2 = 2-phosphoglycolate + (2R)-3-phosphoglycerate + 2 H(+). Its function is as follows. RuBisCO catalyzes two reactions: the carboxylation of D-ribulose 1,5-bisphosphate, the primary event in carbon dioxide fixation, as well as the oxidative fragmentation of the pentose substrate. Both reactions occur simultaneously and in competition at the same active site. The polypeptide is Ribulose bisphosphate carboxylase large chain (Halorhodospira halophila (strain DSM 244 / SL1) (Ectothiorhodospira halophila (strain DSM 244 / SL1))).